A 111-amino-acid polypeptide reads, in one-letter code: Large ribosomal subunit protein uL23 (111 aa).

This sequence belongs to the universal ribosomal protein uL23 family. As to quaternary structure, part of the 50S ribosomal subunit. Contacts protein L29, and trigger factor when it is bound to the ribosome.

Its function is as follows. One of the early assembly proteins it binds 23S rRNA. One of the proteins that surrounds the polypeptide exit tunnel on the outside of the ribosome. Forms the main docking site for trigger factor binding to the ribosome. This chain is Large ribosomal subunit protein uL23, found in Chlamydia muridarum (strain MoPn / Nigg).